The sequence spans 172 residues: Large ribosomal subunit protein bL17 (172 aa).

Positions 140-160 are enriched in basic and acidic residues; that stretch reads LKAEAKAKREEKKPAKKEEKP. Residues 140 to 172 are disordered; it reads LKAEAKAKREEKKPAKKEEKPKKAKKEKAAASN.

Belongs to the bacterial ribosomal protein bL17 family. In terms of assembly, part of the 50S ribosomal subunit. Contacts protein L32.

This is Large ribosomal subunit protein bL17 from Leptospira biflexa serovar Patoc (strain Patoc 1 / Ames).